Reading from the N-terminus, the 82-residue chain is Sec-independent protein translocase protein TatA (82 aa).

The helical transmembrane segment at 1–21 threads the bilayer; the sequence is MGSLSIWHWLIVGAVVLLVFG. A disordered region spans residues 43 to 82; sequence GLSEDEEKAEAKPVGEPSLRSLDHQGAGDPLKTPDARKIG.

It belongs to the TatA/E family. The Tat system comprises two distinct complexes: a TatABC complex, containing multiple copies of TatA, TatB and TatC subunits, and a separate TatA complex, containing only TatA subunits. Substrates initially bind to the TatABC complex, which probably triggers association of the separate TatA complex to form the active translocon.

The protein resides in the cell inner membrane. Functionally, part of the twin-arginine translocation (Tat) system that transports large folded proteins containing a characteristic twin-arginine motif in their signal peptide across membranes. TatA could form the protein-conducting channel of the Tat system. This chain is Sec-independent protein translocase protein TatA, found in Methylocella silvestris (strain DSM 15510 / CIP 108128 / LMG 27833 / NCIMB 13906 / BL2).